An 836-amino-acid polypeptide reads, in one-letter code: Enhancer of polycomb homolog 1 (836 aa).

Lys319 participates in a covalent cross-link: Glycyl lysine isopeptide (Lys-Gly) (interchain with G-Cter in SUMO2). Disordered regions lie at residues Lys335–Ala360 and Tyr372–Pro401. Residues Pro346–Ala360 show a composition bias toward low complexity. A Phosphoserine modification is found at Ser539. A Glycyl lysine isopeptide (Lys-Gly) (interchain with G-Cter in SUMO2) cross-link involves residue Lys673. A disordered region spans residues Val802–Asn829. A compositionally biased stretch (basic and acidic residues) spans Val811–Lys820.

It belongs to the enhancer of polycomb family. Component of the NuA4 histone acetyltransferase complex which contains the catalytic subunit KAT5/TIP60 and the subunits EP400, TRRAP/PAF400, BRD8/SMAP, EPC1, DMAP1/DNMAP1, RUVBL1/TIP49, RUVBL2, ING3, actin, ACTL6A/BAF53A, MORF4L1/MRG15, MORF4L2/MRGX, MRGBP, YEATS4/GAS41, VPS72/YL1 and MEAF6. KAT5/TIP60, EPC1, and ING3 together constitute a minimal HAT complex termed Piccolo NuA4. Component of a NuA4-related complex which contains EP400, TRRAP/PAF400, SRCAP, BRD8/SMAP, EPC1, DMAP1/DNMAP1, RUVBL1/TIP49, RUVBL2, actin, ACTL6A/BAF53A, VPS72 and YEATS4/GAS41. Interacts with TRIM27. Interacts with MBTD1; interaction is direct and promotes recruitment of MBTD1 into the NuA4 histone acetyltransferase complex.

Its subcellular location is the nucleus. It is found in the cytoplasm. Functionally, component of the NuA4 histone acetyltransferase (HAT) complex, a multiprotein complex involved in transcriptional activation of select genes principally by acetylation of nucleosomal histones H4 and H2A. The NuA4 complex plays a direct role in repair of DNA double-strand breaks (DSBs) by promoting homologous recombination (HR). The NuA4 complex is also required for spermatid development by promoting acetylation of histones: histone acetylation is required for histone replacement during the transition from round to elongating spermatids. In the NuA4 complex, EPC1 is required to recruit MBTD1 into the complex. This Homo sapiens (Human) protein is Enhancer of polycomb homolog 1.